A 1079-amino-acid polypeptide reads, in one-letter code: Capping protein inhibiting regulator of actin dynamics (1079 aa).

Residues 1-11 are compositionally biased toward basic and acidic residues; it reads MSQENVSDKVR. 7 disordered regions span residues 1–293, 308–327, 341–383, 420–453, 493–522, 606–639, and 658–1054; these read MSQE…EEER, ERKR…AEKR, EHRI…EWKR, PVTP…PTLS, EGKK…VFES, IFGQ…VQSR, and PSFL…TTQV. The span at 36 to 45 shows a compositional bias: acidic residues; sequence DEGSSDEEEV. Positions 64–76 are enriched in basic and acidic residues; it reads SAKEKSVSHDTVQ. Residues 115–134 are compositionally biased toward basic residues; it reads AKHKLSVKPKNQRVSRKHRR. Acidic residues predominate over residues 140–158; that stretch reads HEDDFSEIQEEFEKDEEVF. Residues 159 to 293 are compositionally biased toward basic and acidic residues; it reads DSSREDYGII…EERKRAEEER (135 aa). Residues 420 to 434 show a composition bias toward polar residues; it reads PVTPATGQQGETTAE. The span at 670-682 shows a compositional bias: polar residues; the sequence is PKSQRSESGSPIQ. Positions 684–695 are enriched in acidic residues; that stretch reads ESEDSDTKDEDG. Over residues 756-781 the composition is skewed to polar residues; the sequence is DNSTLSEKSSPISPQQENIEFQTTVA. Basic and acidic residues-rich tracts occupy residues 896-930 and 944-983; these read WREK…DKET and GFRE…EDKG. A compositionally biased stretch (polar residues) spans 984-993; it reads NGSSSIISKH. Residues 994-1016 are compositionally biased toward basic and acidic residues; the sequence is QTADENKRPDTLLARFERRDNLK. Residues 1020–1033 show a composition bias toward polar residues; sequence TLPSSVTVEITDST.

As to quaternary structure, directly interacts with actin-capping proteins; this interaction decreases the binding of capping proteins to actin.

It is found in the cytoplasm. The protein localises to the cytosol. Its function is as follows. Involved in epithelial cell integrity by acting on the maintenance of the actin cytoskeleton. Positively regulates the actin polymerization, by inhibiting the interaction of actin-capping proteins with actin. In Danio rerio (Zebrafish), this protein is Capping protein inhibiting regulator of actin dynamics (crad).